A 370-amino-acid polypeptide reads, in one-letter code: Probable butyrate kinase (370 aa).

It belongs to the acetokinase family.

It is found in the cytoplasm. It catalyses the reaction butanoate + ATP = butanoyl phosphate + ADP. This is Probable butyrate kinase from Elusimicrobium minutum (strain Pei191).